The chain runs to 285 residues: Bifunctional protein FolD (285 aa).

NADP(+) contacts are provided by residues 165-167, Ser190, and Ile231; that span reads GRS.

It belongs to the tetrahydrofolate dehydrogenase/cyclohydrolase family. In terms of assembly, homodimer.

It catalyses the reaction (6R)-5,10-methylene-5,6,7,8-tetrahydrofolate + NADP(+) = (6R)-5,10-methenyltetrahydrofolate + NADPH. It carries out the reaction (6R)-5,10-methenyltetrahydrofolate + H2O = (6R)-10-formyltetrahydrofolate + H(+). It functions in the pathway one-carbon metabolism; tetrahydrofolate interconversion. In terms of biological role, catalyzes the oxidation of 5,10-methylenetetrahydrofolate to 5,10-methenyltetrahydrofolate and then the hydrolysis of 5,10-methenyltetrahydrofolate to 10-formyltetrahydrofolate. The chain is Bifunctional protein FolD from Verminephrobacter eiseniae (strain EF01-2).